The following is a 314-amino-acid chain: MTRTRSGSLAAGGLNWASLPLKLFAGGNAKFWHPADIDFTRDRADWEKLSDDERDYATRLCTQFIAGEEAVTEDIQPFMSAMRAEGRLADEMYLTQFAFEEAKHTQVFRMWLDAVGISEDLHRYLDDLPAYRQIFYAELPECLNALSADPSPAAQVRASVTYNHIVEGMLALTGYYAWHKICVERAILPGMQELVRRIGDDERRHMAWGTFTCRRHVAADDANWTVFETRMNELIPLALRLIEEGFALYGDQPPFDLSKDDFLQYSTDKGMRRFGTISNARGRPVAEIDVDYSPAQLEDTFADEDRRTLAAASA.

Mn(2+) is bound by residues Glu68, Glu101, and His104. The segment at residues 71–162 (VTEDIQPFMS…AAQVRASVTY (92 aa)) is a cross-link (3-(O4'-tyrosyl)-valine (Val-Tyr)). Glu101 is a binding site for Fe cation. Fe cation contacts are provided by Glu167, Glu202, and His205.

It belongs to the ribonucleoside diphosphate reductase small chain family. R2-like ligand binding oxidase subfamily. Homodimer. Requires Fe cation as cofactor. Mn(2+) serves as cofactor.

Its function is as follows. Probable oxidase that might be involved in lipid metabolism. This is R2-like ligand binding oxidase from Mycobacterium tuberculosis (strain ATCC 25177 / H37Ra).